We begin with the raw amino-acid sequence, 278 residues long: Secreted RxLR effector protein 151 (278 aa).

The signal sequence occupies residues 1–18; sequence MRNRAVLFGLFFIGYSSC. A RxLR-dEER motif is present at residues 49–64; sequence RLLQVDGPKRILAEER.

This sequence belongs to the RxLR effector family.

It is found in the secreted. It localises to the host endoplasmic reticulum membrane. Secreted effector that completely suppresses the host cell death induced by cell death-inducing proteins. The polypeptide is Secreted RxLR effector protein 151 (Plasmopara viticola (Downy mildew of grapevine)).